The chain runs to 478 residues: GMP reductase (478 aa).

2 consecutive CBS domains span residues 95–152 (VVDT…VRDI) and 153–211 (ALSD…AVDA). Residues 245–247 (DTA) and 295–297 (GVG) contribute to the NADP(+) site. Catalysis depends on Cys-302, which acts as the Thioimidate intermediate.

The protein belongs to the IMPDH/GMPR family. GuaB1 subfamily. Homooctamer composed of two tetramers. The oligomerization state is regulated by ligands and pH. Requires a monovalent cation as cofactor.

It carries out the reaction IMP + NH4(+) + NADP(+) = GMP + NADPH + 2 H(+). It functions in the pathway purine metabolism; IMP biosynthesis via salvage pathway. Its activity is regulated as follows. Activity is allosterically regulated by the ATP/GTP ratio in a pH-dependent manner. At pH 7.8, GTP has only a minor positive effect and ATP only a minor negative effect on the activity, however, at lower pH values, the effects of ATP and GTP increase. ATP-dependent inhibition can be restored by increasing GTP concentration. IMP and XMP are competitive inhibitors. Functionally, involved in the purine-salvage pathway. Catalyzes the NADPH-dependent conversion of GMP to IMP. Is not essential for viability, but may contribute to the regulation of the purine nucleotide pool by recycling GMP to IMP. The protein is GMP reductase of Mycolicibacterium smegmatis (strain ATCC 700084 / mc(2)155) (Mycobacterium smegmatis).